We begin with the raw amino-acid sequence, 229 residues long: Flagellar L-ring protein (229 aa).

The signal sequence occupies residues 1–25; it reads MKQVRLLPSAPVRAVCALAVAALAG. Cysteine 26 is lipidated: N-palmitoyl cysteine. A lipid anchor (S-diacylglycerol cysteine) is attached at cysteine 26.

This sequence belongs to the FlgH family. As to quaternary structure, the basal body constitutes a major portion of the flagellar organelle and consists of four rings (L,P,S, and M) mounted on a central rod.

It is found in the cell outer membrane. It localises to the bacterial flagellum basal body. Its function is as follows. Assembles around the rod to form the L-ring and probably protects the motor/basal body from shearing forces during rotation. In Burkholderia ambifaria (strain MC40-6), this protein is Flagellar L-ring protein.